A 209-amino-acid chain; its full sequence is Large ribosomal subunit protein uL3 (209 aa).

A disordered region spans residues 132 to 153 (ATHGNSLSHRVPGSIGQNQTPG). N5-methylglutamine is present on Gln150.

It belongs to the universal ribosomal protein uL3 family. Part of the 50S ribosomal subunit. Forms a cluster with proteins L14 and L19. In terms of processing, methylated by PrmB.

In terms of biological role, one of the primary rRNA binding proteins, it binds directly near the 3'-end of the 23S rRNA, where it nucleates assembly of the 50S subunit. This is Large ribosomal subunit protein uL3 from Enterobacter sp. (strain 638).